Reading from the N-terminus, the 33-residue chain is Gaegurin-1 (33 aa).

C27 and C33 are joined by a disulfide.

The protein belongs to the frog skin active peptide (FSAP) family. Brevinin subfamily. Monomer. As to expression, expressed by the skin glands.

Its subcellular location is the secreted. Functionally, has a non-hemolytic activity. Has a broad spectrum of activity against both Gram-positive and Gram-negative bacteria, fungi and protozoa. This Glandirana rugosa (Japanese wrinkled frog) protein is Gaegurin-1 (GGN1).